A 337-amino-acid polypeptide reads, in one-letter code: Replication-associated protein (337 aa).

The CRESS-DNA virus Rep endonuclease domain maps to 12–114 (RLQTKYVFLT…DGNVITKGEF (103 aa)). The short motif at 19-22 (FLTY) is the RCR-1 element. Glutamate 53, histidine 61, and histidine 63 together coordinate a divalent metal cation. An RCR-2 motif is present at residues 61–63 (HLH). Tyrosine 101 serves as the catalytic For DNA cleavage activity. The RCR-3 motif lies at 101-104 (YISK). Residue aspartate 105 participates in a divalent metal cation binding. The tract at residues 163–175 (SANKLFPPQPEIY) is oligomerization. ATP is bound at residue 216–223 (GPSRTGKT). The transactivation stretch occupies residues 239-257 (IDFTVYDDHATYNVIDDIP). The short motif at 279-289 (KYGKKKKIKGG) is the Nuclear localization signal element.

This sequence belongs to the geminiviridae Rep protein family. As to quaternary structure, homooligomer. Rep binds to repeated DNA motifs (iterons). Forms the O-complex, which is a Rep-DNA complex involved in the initiation of RCR. Part of the C- and V-complexes which are RepA-Rep-DNA complexes involved in the c-sense and v-sense transcription. It depends on Mg(2+) as a cofactor. Requires Mn(2+) as cofactor.

The protein resides in the host nucleus. Functionally, essential for the replication of viral ssDNA. The closed circular ssDNA genome is first converted to a superhelical dsDNA. Rep binds a specific region at the genome origin of replication. It introduces an endonucleolytic nick within the conserved sequence 5'-TAATATTAC-3' in the intergenic region of the genome present in all geminiviruses, thereby initiating the rolling circle replication (RCR). Following cleavage, binds covalently to the 5'-phosphate of DNA as a tyrosyl ester. The cleavage gives rise to a free 3'-OH that serves as a primer for the cellular DNA polymerase. The polymerase synthesizes the (+) strand DNA by rolling circle mechanism. After one round of replication, a Rep-catalyzed nucleotidyl transfer reaction releases a circular single-stranded virus genome, thereby terminating the replication. Displays origin-specific DNA cleavage, nucleotidyl transferase, ATPase and helicase activities. Acts as an inhibitor of C-sense gene transcription. The polypeptide is Replication-associated protein (Tobacco yellow dwarf virus (strain Australia) (TYDV)).